The following is a 156-amino-acid chain: 6,7-dimethyl-8-ribityllumazine synthase (156 aa).

5-amino-6-(D-ribitylamino)uracil contacts are provided by residues Phe-22, Ala-57–Glu-59, and Thr-81–Ile-83. Gly-86–Thr-87 contributes to the (2S)-2-hydroxy-3-oxobutyl phosphate binding site. His-89 serves as the catalytic Proton donor. Residue Phe-114 coordinates 5-amino-6-(D-ribitylamino)uracil. Arg-128 contributes to the (2S)-2-hydroxy-3-oxobutyl phosphate binding site.

Belongs to the DMRL synthase family. In terms of assembly, forms an icosahedral capsid composed of 60 subunits, arranged as a dodecamer of pentamers.

It carries out the reaction (2S)-2-hydroxy-3-oxobutyl phosphate + 5-amino-6-(D-ribitylamino)uracil = 6,7-dimethyl-8-(1-D-ribityl)lumazine + phosphate + 2 H2O + H(+). It functions in the pathway cofactor biosynthesis; riboflavin biosynthesis; riboflavin from 2-hydroxy-3-oxobutyl phosphate and 5-amino-6-(D-ribitylamino)uracil: step 1/2. In terms of biological role, catalyzes the formation of 6,7-dimethyl-8-ribityllumazine by condensation of 5-amino-6-(D-ribitylamino)uracil with 3,4-dihydroxy-2-butanone 4-phosphate. This is the penultimate step in the biosynthesis of riboflavin. This Escherichia coli O45:K1 (strain S88 / ExPEC) protein is 6,7-dimethyl-8-ribityllumazine synthase.